Consider the following 288-residue polypeptide: Quinate/shikimate dehydrogenase (288 aa).

Substrate is bound by residues Lys-71 and Asp-107. NAD(+) is bound by residues Ala-132–Ala-135, Asn-155–Asp-158, Lys-205, Cys-232–Asn-235, and Gly-255.

It belongs to the shikimate dehydrogenase family. In terms of assembly, homodimer.

The enzyme catalyses L-quinate + NAD(+) = 3-dehydroquinate + NADH + H(+). The catalysed reaction is L-quinate + NADP(+) = 3-dehydroquinate + NADPH + H(+). It carries out the reaction shikimate + NADP(+) = 3-dehydroshikimate + NADPH + H(+). It catalyses the reaction shikimate + NAD(+) = 3-dehydroshikimate + NADH + H(+). It functions in the pathway metabolic intermediate biosynthesis; chorismate biosynthesis; chorismate from D-erythrose 4-phosphate and phosphoenolpyruvate: step 4/7. Its function is as follows. The actual biological function of YdiB remains unclear, nor is it known whether 3-dehydroshikimate or quinate represents the natural substrate. Catalyzes the reversible NAD-dependent reduction of both 3-dehydroshikimate (DHSA) and 3-dehydroquinate to yield shikimate (SA) and quinate, respectively. It can use both NAD or NADP for catalysis, however it has higher catalytic efficiency with NAD. The protein is Quinate/shikimate dehydrogenase of Escherichia coli O17:K52:H18 (strain UMN026 / ExPEC).